A 346-amino-acid polypeptide reads, in one-letter code: Tetraacyldisaccharide 4'-kinase (346 aa).

Residue 54–61 (TVGGAGKT) coordinates ATP.

It belongs to the LpxK family.

It catalyses the reaction a lipid A disaccharide + ATP = a lipid IVA + ADP + H(+). It participates in glycolipid biosynthesis; lipid IV(A) biosynthesis; lipid IV(A) from (3R)-3-hydroxytetradecanoyl-[acyl-carrier-protein] and UDP-N-acetyl-alpha-D-glucosamine: step 6/6. In terms of biological role, transfers the gamma-phosphate of ATP to the 4'-position of a tetraacyldisaccharide 1-phosphate intermediate (termed DS-1-P) to form tetraacyldisaccharide 1,4'-bis-phosphate (lipid IVA). In Rhizobium meliloti (strain 1021) (Ensifer meliloti), this protein is Tetraacyldisaccharide 4'-kinase.